Consider the following 232-residue polypeptide: 5'-methylthioadenosine/S-adenosylhomocysteine nucleosidase (232 aa).

The Proton acceptor role is filled by E12. Residues G78, M153, and 174–175 (ME) contribute to the substrate site. D198 (proton donor) is an active-site residue.

Belongs to the PNP/UDP phosphorylase family. MtnN subfamily.

The enzyme catalyses S-adenosyl-L-homocysteine + H2O = S-(5-deoxy-D-ribos-5-yl)-L-homocysteine + adenine. It catalyses the reaction S-methyl-5'-thioadenosine + H2O = 5-(methylsulfanyl)-D-ribose + adenine. The catalysed reaction is 5'-deoxyadenosine + H2O = 5-deoxy-D-ribose + adenine. It functions in the pathway amino-acid biosynthesis; L-methionine biosynthesis via salvage pathway; S-methyl-5-thio-alpha-D-ribose 1-phosphate from S-methyl-5'-thioadenosine (hydrolase route): step 1/2. Catalyzes the irreversible cleavage of the glycosidic bond in both 5'-methylthioadenosine (MTA) and S-adenosylhomocysteine (SAH/AdoHcy) to adenine and the corresponding thioribose, 5'-methylthioribose and S-ribosylhomocysteine, respectively. Also cleaves 5'-deoxyadenosine, a toxic by-product of radical S-adenosylmethionine (SAM) enzymes, into 5-deoxyribose and adenine. The sequence is that of 5'-methylthioadenosine/S-adenosylhomocysteine nucleosidase from Hydrogenovibrio crunogenus (strain DSM 25203 / XCL-2) (Thiomicrospira crunogena).